The following is a 395-amino-acid chain: N5-carboxyaminoimidazole ribonucleotide synthase (395 aa).

ATP contacts are provided by residues K109, K149, 184-187, E192, and 268-269; these read EEFI and NE. The 186-residue stretch at 113-298 folds into the ATP-grasp domain; sequence RQLLTRLGLP…QFEQQLRAIA (186 aa).

The protein belongs to the PurK/PurT family. Homodimer.

It carries out the reaction 5-amino-1-(5-phospho-beta-D-ribosyl)imidazole + hydrogencarbonate + ATP = 5-carboxyamino-1-(5-phospho-D-ribosyl)imidazole + ADP + phosphate + 2 H(+). Its pathway is purine metabolism; IMP biosynthesis via de novo pathway; 5-amino-1-(5-phospho-D-ribosyl)imidazole-4-carboxylate from 5-amino-1-(5-phospho-D-ribosyl)imidazole (N5-CAIR route): step 1/2. Functionally, catalyzes the ATP-dependent conversion of 5-aminoimidazole ribonucleotide (AIR) and HCO(3)(-) to N5-carboxyaminoimidazole ribonucleotide (N5-CAIR). The protein is N5-carboxyaminoimidazole ribonucleotide synthase of Synechococcus elongatus (strain ATCC 33912 / PCC 7942 / FACHB-805) (Anacystis nidulans R2).